Here is a 333-residue protein sequence, read N- to C-terminus: Forkhead box protein unc-130 (333 aa).

Positions 1-126 (MLFSMESILS…MSGHRKSSHA (126 aa)) are disordered. Positions 14–24 (PKLEPPPKLEP) are enriched in basic and acidic residues. Polar residues predominate over residues 37-50 (RSNTRLSEPSTSAS). Residues 52-62 (LEHDLKFGESR) are compositionally biased toward basic and acidic residues. Positions 98 to 110 (SSDDAKDDDDDDD) are enriched in acidic residues. The segment at residues 127–221 (KPPYSYIALI…DNGSFLRRRK (95 aa)) is a DNA-binding region (fork-head). Residues 304–333 (APVSSGQKRTSSSSSPNENGSSAVSDKLSA) are disordered. The span at 307–333 (SSGQKRTSSSSSPNENGSSAVSDKLSA) shows a compositional bias: low complexity.

In terms of tissue distribution, expressed in ventral body wall muscle. Expressed in the structural cells and two neurons of each ray in the male tail.

Its subcellular location is the nucleus. Functionally, probable transcription factor. Binds to DNA sequence motif 5'-CTGTTTCA-3'. Required for the migration of distal tip cells (DTC) and axonal growth-cones along the dorsal-ventral axis of the body wall, acting by cell autonomous repression of unc-129/TGF-beta expression in ventral body muscle during embyogenesis. Binds to the promoter region of the unc-129 gene. Plays a role in dorsal-ventral patterning and fate specification of the postembryonic mesoderm. Involved in male tail morphogenesis and in embryogenesis. Plays a role in the development of sensory neurons and is required to repress AWA fate and promote ASG fate in the ASG chemosensory neurons. Regulates expression of a class of small RNAs, known as 21U-RNAs. The protein is Forkhead box protein unc-130 of Caenorhabditis elegans.